Reading from the N-terminus, the 381-residue chain is Transcriptional regulatory protein FlgR (381 aa).

In terms of domain architecture, Response regulatory spans 2-113 (KIAIVEDDIN…LLLESIYRTK (112 aa)). Aspartate 51 bears the 4-aspartylphosphate mark. The Sigma-54 factor interaction domain maps to 136-365 (FLAASKALEE…LLGVVERAAI (230 aa)). Residues 164 to 171 (GESGVGKE) and 227 to 236 (ANKGTIFLDE) each bind ATP.

Post-translationally, phosphorylated by FlgS.

In terms of biological role, member of the two-component regulatory system FlgR/FlgS that induces the transcriptional induction of the genes needed in motility and flagellar biogenesis. Upon phosphorylation by FlgS, functions as a transcriptional regulator and activates transcription of RpoN-dependent flagellar genes. In Helicobacter pylori (strain ATCC 700392 / 26695) (Campylobacter pylori), this protein is Transcriptional regulatory protein FlgR (flgR).